Here is a 323-residue protein sequence, read N- to C-terminus: Ferrochelatase (323 aa).

Histidine 196 and glutamate 277 together coordinate Fe cation.

Belongs to the ferrochelatase family.

It is found in the cytoplasm. The enzyme catalyses heme b + 2 H(+) = protoporphyrin IX + Fe(2+). It functions in the pathway porphyrin-containing compound metabolism; protoheme biosynthesis; protoheme from protoporphyrin-IX: step 1/1. In terms of biological role, catalyzes the ferrous insertion into protoporphyrin IX. The sequence is that of Ferrochelatase from Haemophilus influenzae (strain 86-028NP).